The following is a 455-amino-acid chain: Phosphoglucosamine mutase (455 aa).

Serine 108 functions as the Phosphoserine intermediate in the catalytic mechanism. Mg(2+)-binding residues include serine 108, aspartate 248, aspartate 250, and aspartate 252. Residue serine 108 is modified to Phosphoserine.

It belongs to the phosphohexose mutase family. Requires Mg(2+) as cofactor. In terms of processing, activated by phosphorylation.

The enzyme catalyses alpha-D-glucosamine 1-phosphate = D-glucosamine 6-phosphate. Functionally, catalyzes the conversion of glucosamine-6-phosphate to glucosamine-1-phosphate. This Leuconostoc mesenteroides subsp. mesenteroides (strain ATCC 8293 / DSM 20343 / BCRC 11652 / CCM 1803 / JCM 6124 / NCDO 523 / NBRC 100496 / NCIMB 8023 / NCTC 12954 / NRRL B-1118 / 37Y) protein is Phosphoglucosamine mutase.